The following is a 406-amino-acid chain: Proteasome-activating nucleotidase 1 (406 aa).

Residues 13 to 72 (YDKDSASQQEKITALQERLEVLETQNEEMRDKLLDTNAENNKYQQKLERLTHENKKLKQS) adopt a coiled-coil conformation. Residues 194-199 (GTGKTM) and His333 each bind ATP. A docks into pockets in the proteasome alpha-ring to cause gate opening region spans residues 404 to 406 (AFA).

Belongs to the AAA ATPase family. Homododecamer, in a proposed two stacked hexameric ring configuration, but may also form homohexamer. The hexameric complex has likely a two-ring architecture resembling a top hat that caps the 20S proteasome core at one or both ends. Upon ATP-binding, the C-terminus of PAN probably interacts with the alpha-rings of the proteasome core by binding to the intersubunit pockets. Interacts with SAMP1-MoaE conjugate in vitro, but does not bind to SAMP1 or MoaE alone. Interacts with NcsA.

It localises to the cytoplasm. Its activity is regulated as follows. ATPase activity is inhibited by EDTA in vitro. Functionally, ATPase which is responsible for recognizing, binding, unfolding and translocation of substrate proteins into the archaeal 20S proteasome core particle. Is essential for opening the gate of the 20S proteasome via an interaction with its C-terminus, thereby allowing substrate entry and access to the site of proteolysis. Thus, the C-terminus of the proteasomal ATPase functions like a 'key in a lock' to induce gate opening and therefore regulate proteolysis. Unfolding activity requires energy from ATP hydrolysis, whereas ATP binding alone promotes ATPase-20S proteasome association which triggers gate opening, and supports translocation of unfolded substrates. Is also able to cleave other nucleoside triphosphates including GTP and TTP, but the rate of hydrolysis is 4- to 5-fold slower than for ATP. This chain is Proteasome-activating nucleotidase 1, found in Haloferax volcanii (strain ATCC 29605 / DSM 3757 / JCM 8879 / NBRC 14742 / NCIMB 2012 / VKM B-1768 / DS2) (Halobacterium volcanii).